Here is an 88-residue protein sequence, read N- to C-terminus: MVSKQKIEELVKKFGRNAKDTGHLPVQIAILTEKIESLKKHFEANKKDLHSMRGFIAKVNHRKALLSHLKSSNYELYLETIKALNIRK.

This sequence belongs to the universal ribosomal protein uS15 family. As to quaternary structure, part of the 30S ribosomal subunit. Forms a bridge to the 50S subunit in the 70S ribosome, contacting the 23S rRNA.

In terms of biological role, one of the primary rRNA binding proteins, it binds directly to 16S rRNA where it helps nucleate assembly of the platform of the 30S subunit by binding and bridging several RNA helices of the 16S rRNA. Its function is as follows. Forms an intersubunit bridge (bridge B4) with the 23S rRNA of the 50S subunit in the ribosome. This is Small ribosomal subunit protein uS15 from Metamycoplasma arthritidis (strain 158L3-1) (Mycoplasma arthritidis).